The chain runs to 308 residues: Testis-specific Y-encoded protein 3 (308 aa).

This sequence belongs to the nucleosome assembly protein (NAP) family.

The protein localises to the cytoplasm. It localises to the nucleus. Functionally, may be involved in sperm differentiation and proliferation. The polypeptide is Testis-specific Y-encoded protein 3 (TSPY3) (Homo sapiens (Human)).